The primary structure comprises 102 residues: Integration host factor subunit alpha (102 aa).

The protein belongs to the bacterial histone-like protein family. As to quaternary structure, heterodimer of an alpha and a beta chain.

Its function is as follows. This protein is one of the two subunits of integration host factor, a specific DNA-binding protein that functions in genetic recombination as well as in transcriptional and translational control. This Buchnera aphidicola subsp. Acyrthosiphon pisum (strain 5A) protein is Integration host factor subunit alpha.